A 347-amino-acid chain; its full sequence is 3-isopropylmalate dehydrogenase (347 aa).

Residues Arg94, Arg104, Arg128, and Asp219 each coordinate substrate. Residues Asp219, Asp243, and Asp247 each contribute to the Mg(2+) site. Position 279-291 (279-291) interacts with NAD(+); sequence GSAPDIAGQGKAD.

It belongs to the isocitrate and isopropylmalate dehydrogenases family. LeuB type 2 subfamily. As to quaternary structure, homodimer. The cofactor is Mg(2+). Requires Mn(2+) as cofactor.

It is found in the cytoplasm. The enzyme catalyses (2R,3S)-3-isopropylmalate + NAD(+) = 4-methyl-2-oxopentanoate + CO2 + NADH. Its pathway is amino-acid biosynthesis; L-leucine biosynthesis; L-leucine from 3-methyl-2-oxobutanoate: step 3/4. In terms of biological role, catalyzes the oxidation of 3-carboxy-2-hydroxy-4-methylpentanoate (3-isopropylmalate) to 3-carboxy-4-methyl-2-oxopentanoate. The product decarboxylates to 4-methyl-2 oxopentanoate. In Streptomyces avermitilis (strain ATCC 31267 / DSM 46492 / JCM 5070 / NBRC 14893 / NCIMB 12804 / NRRL 8165 / MA-4680), this protein is 3-isopropylmalate dehydrogenase.